The sequence spans 552 residues: FERRY endosomal RAB5 effector complex subunit 3 (552 aa).

Residues 383–403 (LKESLDSGNQNGGNDDKTKNA) are disordered.

As to quaternary structure, component of the FERRY complex composed of five subunits, TBCK, PPP1R21, FERRY3, CRYZL1 and GATD1 with a ratio of 1:2:1:2:4, respectively.

The protein resides in the cytoplasm. Its subcellular location is the early endosome. Its function is as follows. Component of the FERRY complex (Five-subunit Endosomal Rab5 and RNA/ribosome intermediary). The FERRY complex directly interacts with mRNAs and RAB5A, and functions as a RAB5A effector involved in the localization and the distribution of specific mRNAs most likely by mediating their endosomal transport. The complex recruits mRNAs and ribosomes to early endosomes through direct mRNA-interaction. Plays a role in mast cell degranulation. This Pongo abelii (Sumatran orangutan) protein is FERRY endosomal RAB5 effector complex subunit 3.